Consider the following 663-residue polypeptide: Terreic acid cluster-specific transcription factor atF (663 aa).

The span at Met1–Ala20 shows a compositional bias: polar residues. 2 disordered regions span residues Met1 to Thr28 and Thr55 to Gln126. The segment at residues Cys34–Cys60 is a DNA-binding region (zn(2)-C6 fungal-type). Residues Thr55–Ser64 are compositionally biased toward basic residues. 2 stretches are compositionally biased toward low complexity: residues Ser73–Gln88 and Ala105–Ser125.

Its subcellular location is the nucleus. In terms of biological role, transcription factor that regulates the expression of the gene cluster that mediates the biosynthesis of terreic acid, a quinone epoxide inhibitor of Bruton's tyrosine kinase. In Aspergillus terreus (strain NIH 2624 / FGSC A1156), this protein is Terreic acid cluster-specific transcription factor atF.